The primary structure comprises 206 residues: GTP cyclohydrolase 1 (206 aa).

Positions 1-17 (MDAVTPKKDIPRPDSVR) are enriched in basic and acidic residues. The segment at 1 to 23 (MDAVTPKKDIPRPDSVRRPSQQE) is disordered. Cysteine 95, histidine 98, and cysteine 166 together coordinate Zn(2+).

It belongs to the GTP cyclohydrolase I family. As to quaternary structure, toroid-shaped homodecamer, composed of two pentamers of five dimers.

The catalysed reaction is GTP + H2O = 7,8-dihydroneopterin 3'-triphosphate + formate + H(+). Its pathway is cofactor biosynthesis; 7,8-dihydroneopterin triphosphate biosynthesis; 7,8-dihydroneopterin triphosphate from GTP: step 1/1. In Hyphomonas neptunium (strain ATCC 15444), this protein is GTP cyclohydrolase 1.